The following is a 504-amino-acid chain: ATP synthase subunit alpha (504 aa).

An ATP-binding site is contributed by glycine 169–threonine 176.

This sequence belongs to the ATPase alpha/beta chains family. In terms of assembly, F-type ATPases have 2 components, CF(1) - the catalytic core - and CF(0) - the membrane proton channel. CF(1) has five subunits: alpha(3), beta(3), gamma(1), delta(1), epsilon(1). CF(0) has three main subunits: a(1), b(2) and c(9-12). The alpha and beta chains form an alternating ring which encloses part of the gamma chain. CF(1) is attached to CF(0) by a central stalk formed by the gamma and epsilon chains, while a peripheral stalk is formed by the delta and b chains.

The protein resides in the cell inner membrane. It catalyses the reaction ATP + H2O + 4 H(+)(in) = ADP + phosphate + 5 H(+)(out). Produces ATP from ADP in the presence of a proton gradient across the membrane. The alpha chain is a regulatory subunit. This Leptospira biflexa serovar Patoc (strain Patoc 1 / Ames) protein is ATP synthase subunit alpha.